Consider the following 550-residue polypeptide: MFCVQCEQTIRTPAGNGCSYAQGMCGKTAETSDLQDLLIAALQGLSAWAVKAREYGIINHDVDNFAPRAFFSTLTNVNFDSPRIVGYAREAIAMREALKAQCLSVDANAHCDNPMADLQLVSDDLGELQRQAAEFTPNKDKAAIGENILGLRLLCLYGLKGAAAYMEHAHVLGQYDNDIYAQYHKIMAWLGTWPADMNALLECAMEIGQMNFKVMSILDAGETTKYGHPTPTQVNVKATEGKCILISGHDLKDLYNLLEQTEGTGVNVYTHGEMLPAHGYPELRKFKHLVGNYGSGWQNQQVEFARFPGPIVMTSNCIIDPTVGSYDDRIWTRSIVGWPGVSHLEGDDFGPVIAQAQQMAGFPYSEIPHLITVGFGRQTLLGAADTLIDLVSREKLRHIFLVGGCDGARGERNYFTDFATSVPDDCLILTLACGKYRFNKLEFGDIEGLPRLVDAGQCNDAYSAIILAVTLAEKLGCGVNDLPLSLVLSWFEQKAIVILLTLLSLGVKNIVTGPTAPGFFTPDLLAILNEKFGLRSVTTVEEDMKQLLSA.

[2Fe-2S] cluster contacts are provided by C3, C6, C18, and C25. The hybrid [4Fe-2O-2S] cluster site is built by H249, E273, C317, C405, C433, C458, E492, and K494. C405 bears the Cysteine persulfide mark.

It belongs to the HCP family. It depends on [2Fe-2S] cluster as a cofactor. Hybrid [4Fe-2O-2S] cluster serves as cofactor.

Its subcellular location is the cytoplasm. It catalyses the reaction A + NH4(+) + H2O = hydroxylamine + AH2 + H(+). In terms of biological role, catalyzes the reduction of hydroxylamine to form NH(3) and H(2)O. This is Hydroxylamine reductase from Salmonella paratyphi A (strain ATCC 9150 / SARB42).